The primary structure comprises 184 residues: Shikimate kinase (184 aa).

17-22 (GAGKTT) is an ATP binding site. Thr21 serves as a coordination point for Mg(2+). Substrate contacts are provided by Asp39, Arg63, and Gly85. An ATP-binding site is contributed by Arg123. Residue Arg142 participates in substrate binding.

It belongs to the shikimate kinase family. In terms of assembly, monomer. It depends on Mg(2+) as a cofactor.

It is found in the cytoplasm. The enzyme catalyses shikimate + ATP = 3-phosphoshikimate + ADP + H(+). It functions in the pathway metabolic intermediate biosynthesis; chorismate biosynthesis; chorismate from D-erythrose 4-phosphate and phosphoenolpyruvate: step 5/7. Functionally, catalyzes the specific phosphorylation of the 3-hydroxyl group of shikimic acid using ATP as a cosubstrate. The polypeptide is Shikimate kinase (Burkholderia lata (strain ATCC 17760 / DSM 23089 / LMG 22485 / NCIMB 9086 / R18194 / 383)).